The primary structure comprises 461 residues: Argininosuccinate lyase (461 aa).

It belongs to the lyase 1 family. Argininosuccinate lyase subfamily.

It is found in the cytoplasm. It carries out the reaction 2-(N(omega)-L-arginino)succinate = fumarate + L-arginine. The protein operates within amino-acid biosynthesis; L-arginine biosynthesis; L-arginine from L-ornithine and carbamoyl phosphate: step 3/3. This chain is Argininosuccinate lyase, found in Dehalococcoides mccartyi (strain ATCC BAA-2100 / JCM 16839 / KCTC 5957 / BAV1).